The following is a 593-amino-acid chain: Probable metalloprotease ARX1 (593 aa).

This sequence belongs to the peptidase M24 family. In terms of assembly, component of the nucleoplasmic and cytoplasmic pre-60S ribosomal particles. Interacts directly with REI1.

Its subcellular location is the cytoplasm. It localises to the nucleus. Its function is as follows. Probable metalloprotease involved in proper assembly of pre-ribosomal particles during the biogenesis of the 60S ribosomal subunit. Accompanies the pre-60S particles to the cytoplasm. The sequence is that of Probable metalloprotease ARX1 (ARX1) from Saccharomyces cerevisiae (strain ATCC 204508 / S288c) (Baker's yeast).